The following is a 66-amino-acid chain: Large ribosomal subunit protein uL29 (66 aa).

It belongs to the universal ribosomal protein uL29 family.

The polypeptide is Large ribosomal subunit protein uL29 (Hydrogenobaculum sp. (strain Y04AAS1)).